The chain runs to 137 residues: Nucleoside diphosphate kinase (137 aa).

Positions 9, 57, 85, 91, and 102 each coordinate ATP. His-119 functions as the Pros-phosphohistidine intermediate in the catalytic mechanism.

It belongs to the NDK family. In terms of assembly, homotetramer. Requires Mg(2+) as cofactor.

It localises to the cytoplasm. The enzyme catalyses a 2'-deoxyribonucleoside 5'-diphosphate + ATP = a 2'-deoxyribonucleoside 5'-triphosphate + ADP. The catalysed reaction is a ribonucleoside 5'-diphosphate + ATP = a ribonucleoside 5'-triphosphate + ADP. Functionally, major role in the synthesis of nucleoside triphosphates other than ATP. The ATP gamma phosphate is transferred to the NDP beta phosphate via a ping-pong mechanism, using a phosphorylated active-site intermediate. This Streptococcus thermophilus (strain CNRZ 1066) protein is Nucleoside diphosphate kinase.